The following is a 1368-amino-acid chain: MAVAEAKPQYSHAEKKRFRKSFGKQTDIMPIPNLLEIQLKSYRDFLQTDTKLSEQLNTGLHAAFSSVFPIESFSGNARLEYVGYKLGEPAFDVRECKLRGLTYSAPLRVKIRLVVLDKDASDDPKPIKDIREQDVFMGEIPLMTDVGTFVVNGTERVVVSQLHRSPGVIFEHDKGKTHSSGKLLYSARIIPYRGSWLDFEFDPKDCVYVRIDRRRKLPVSILLRALGYEAEDILSEFFETTRCHLKNGEYHIDLIPQRLRGEIASFDIHVPETGELIVEQGRRITARHIKQMEKSQMQDLVVPRDYLIGKTLAKNIIDTSTGEFLAQANDEITEELLDAMANHGILQIDMIYTNDLDHGSYISDTLKIDPTGSQLEALVEIYRMMRPGEPPTKEAAEALFKNLFFVEERYDLSAVGRMKFNRRVGIKSDEGPGTLTKEDILSVIKTLIDIRNGIGMVDDIDHLGNRRVRSVGEMTENQFRVGLVRVERAVKERLSLVESENLMPQDLINAKPVSAAIKEFFGSSQLSQFMDQVNPLSGVTHKRRVSALGPGGLTRERAGFEVRDVHTTHYGRVCPIETPEGPNIGLINSLSVYARTNEYGFIETPCRKVVNGRVTDEVEYLSAIEEVDQYIAQSNVELDAQGNILADLVPCRHQNEFSLTTPDKINYMDVSPKQIVSVAASLIPFLEHDDANRALMGSNMQRQAVPTLRSEKPLVGTGMERIVASDSGVSVVAKRGGVIDLVDASRIVVRVNDDETTAGETGVDIYNLTKYFRSNQDTCINQRPIVSTGDRIQRGDVLADGPCTDMGELALGQNLLVAFMPWNGYNFEDSILISERIVHDDRFTTIHIEELTCIARDTKLGTEEITADIPNVGESALSNLDESGVVYIGAEVKAGDILVGKVTPKGETQLTPEEKLLRAIFGEKASDVKDSSLRVPSGMNGTVIDVQVFTRDGLEKDARAKSIEEEHLARVRKDLIDERRIREEDIYHRVSHLLLDKVATGGPGSLKPGSKITQDYLDKVEREKWFDIRIEDDAVSQQLEQLSKQLELLTKEMEKRFNDSRKKIIQGDDLAPGVLKIVKVYLAVKRRIQPGDKMAGRHGNKGVISIVVPVEDMPHMEDGTAVDIVLNPLGVPSRMNIGQVLETHLGLAAKGLGRKIAQMLDERQTPEAIKAYLEKIYNHDGVQRVNLKCLNDDELMTLADNLRAGVPMATPVFDGATEQEIKSMLQLADLPADGKTVLIDGRTGNKFDNTVTVGYMYMLKLNHLVDDKMHARSTGSYSLVTQQPLGGKAQFGGQRFGEMEVWALEAYGAAYTLQEMLTVKSDDVGGRTKIYKNIVDGDHRMDPGMPESFNVLLKEIRALGIDIELEHD.

This sequence belongs to the RNA polymerase beta chain family. The RNAP catalytic core consists of 2 alpha, 1 beta, 1 beta' and 1 omega subunit. When a sigma factor is associated with the core the holoenzyme is formed, which can initiate transcription.

It carries out the reaction RNA(n) + a ribonucleoside 5'-triphosphate = RNA(n+1) + diphosphate. DNA-dependent RNA polymerase catalyzes the transcription of DNA into RNA using the four ribonucleoside triphosphates as substrates. This is DNA-directed RNA polymerase subunit beta from Legionella pneumophila (strain Paris).